A 604-amino-acid chain; its full sequence is Elongation factor 4 (604 aa).

Residues Asp-9–Ala-191 enclose the tr-type G domain. Residues Asp-21–Thr-26 and Asn-138–Asp-141 contribute to the GTP site.

This sequence belongs to the TRAFAC class translation factor GTPase superfamily. Classic translation factor GTPase family. LepA subfamily.

The protein localises to the cell inner membrane. The enzyme catalyses GTP + H2O = GDP + phosphate + H(+). Required for accurate and efficient protein synthesis under certain stress conditions. May act as a fidelity factor of the translation reaction, by catalyzing a one-codon backward translocation of tRNAs on improperly translocated ribosomes. Back-translocation proceeds from a post-translocation (POST) complex to a pre-translocation (PRE) complex, thus giving elongation factor G a second chance to translocate the tRNAs correctly. Binds to ribosomes in a GTP-dependent manner. The protein is Elongation factor 4 of Prosthecochloris aestuarii (strain DSM 271 / SK 413).